The primary structure comprises 251 residues: CCN family member 5 (251 aa).

The signal sequence occupies residues 1-23 (MRGNPLIHLLAISFLCILSMVYS). The region spanning 24 to 103 (QLCPAPCACP…EEDDGSCEVN (80 aa)) is the IGFBP N-terminal domain. 6 disulfides stabilise this stretch: Cys26–Cys50, Cys30–Cys52, Cys32–Cys53, Cys39–Cys56, Cys64–Cys78, and Cys70–Cys100. Positions 98 to 164 (GSCEVNGRRY…GRCCPEWVCD (67 aa)) constitute a VWFC domain. In terms of domain architecture, TSP type-1 spans 195–239 (CPNWSTAWGPCSTTCGLGIATRVSNQNRFCQLEIQRRLCLSRPCL). Asn197 carries N-linked (GlcNAc...) asparagine glycosylation.

It belongs to the CCN family.

Its subcellular location is the secreted. In terms of biological role, may play an important role in modulating bone turnover. Promotes the adhesion of osteoblast cells and inhibits the binding of fibrinogen to integrin receptors. In addition, inhibits osteocalcin production. The polypeptide is CCN family member 5 (Ccn5) (Mus musculus (Mouse)).